A 125-amino-acid polypeptide reads, in one-letter code: Translation initiation factor 5A (125 aa).

Hypusine is present on Lys-35.

It belongs to the eIF-5A family.

The protein localises to the cytoplasm. Its function is as follows. Functions by promoting the formation of the first peptide bond. This Methanoregula boonei (strain DSM 21154 / JCM 14090 / 6A8) protein is Translation initiation factor 5A (eIF5A).